Here is a 373-residue protein sequence, read N- to C-terminus: MPLQPFKTSNLLTMGVELELQLISLSNFDLTAASPDILELLGRSSFPGSFTPEITESMLEIATDVHEEYDQLLKQLFHIRDTLVTVGDRLNIGICGGGTHPFQMWSNQRIFNKTRFIEVSELYGYLTKQFTIFGQHIHIGCEDGNQALFLLHSLNRYIPHFIALSASSPFVQSKDTLYNSARLNSVFAFPLSGRAPFVLNWDEFSLGYFEKMEHTGIVKSMKDFYWDLRPKPEFGTIEMRVCDSPLTVERAAALACYMQALCSYLLENKEPLPHEDDYLVYNYNRFQACRFGLDGTLVHPKTYEQILLREDILTTLRRLKPYANQLNSTMALEHIYEITHKGSDASFLREKYAEHRTLESVVNESLKQFRSSK.

This sequence belongs to the glutamate--cysteine ligase type 2 family. YbdK subfamily.

It catalyses the reaction L-cysteine + L-glutamate + ATP = gamma-L-glutamyl-L-cysteine + ADP + phosphate + H(+). In terms of biological role, ATP-dependent carboxylate-amine ligase which exhibits weak glutamate--cysteine ligase activity. The protein is Putative glutamate--cysteine ligase 2-1 of Legionella pneumophila (strain Paris).